A 393-amino-acid polypeptide reads, in one-letter code: MAAVGSGGSTATAGPGAVSAGALEPGTSSAAHRRLKYISLAVLVVQNASLILSIRYARTLPGDRFFATTAVVMAEVLKGLTCLLLLFAQKRGNVKHLVLFLHEAVLVQYMDTLKLAVPSLIYTLQNNLQYIAISNLPAATFQVTYQLKILTTALFSVLMLNRSLSRLQWASLLLLFTGVAIVQAQQAGGGGPRPLDQNPGVGLAAVVASCLSSGFAGVYFEKILKGSSGSVWLRNLQLGLFGTALGLVGLWWAEGTAVTHRGFFFGYTPAVWGVVLNQAFGGLLVAVVVKYADNILKGFATSLSIVLSTVASIRLFGFHVDPLFALGAGLVIGAVYLYSLPRGAAKAIASASAPTSGPCTHQQPPGQPPPPQLSSHHGDLSTEPFLPKSVLVK.

10 helical membrane passes run 3–23 (AVGSGGSTATAGPGAVSAGAL), 37–57 (YISLAVLVVQNASLILSIRYA), 65–85 (FFATTAVVMAEVLKGLTCLLL), 97–117 (LVLFLHEAVLVQYMDTLKLAV), 140–160 (TFQVTYQLKILTTALFSVLML), 169–189 (WASLLLLFTGVAIVQAQQAGG), 200–220 (GVGLAAVVASCLSSGFAGVYF), 238–258 (LGLFGTALGLVGLWWAEGTAV), 269–289 (PAVWGVVLNQAFGGLLVAVVV), and 315–335 (LFGFHVDPLFALGAGLVIGAV). Residues 353 to 393 (APTSGPCTHQQPPGQPPPPQLSSHHGDLSTEPFLPKSVLVK) form a disordered region.

This sequence belongs to the nucleotide-sugar transporter family. SLC35A subfamily. Interacts with SLC35A3; the interaction is reduced in the presence of SLC35A4. Found in a complex with SLC35A3 and SLC35A4.

The protein localises to the golgi apparatus membrane. The catalysed reaction is UMP(out) + UDP-alpha-D-galactose(in) = UMP(in) + UDP-alpha-D-galactose(out). It catalyses the reaction UDP-N-acetyl-alpha-D-galactosamine(in) + UMP(out) = UDP-N-acetyl-alpha-D-galactosamine(out) + UMP(in). It carries out the reaction UMP(out) + UDP-alpha-D-glucose(in) = UMP(in) + UDP-alpha-D-glucose(out). The enzyme catalyses UMP(out) + UDP-N-acetyl-alpha-D-glucosamine(in) = UMP(in) + UDP-N-acetyl-alpha-D-glucosamine(out). The catalysed reaction is UDP-alpha-D-galactose(in) + AMP(out) = UDP-alpha-D-galactose(out) + AMP(in). It catalyses the reaction UDP-alpha-D-galactose(in) + CMP(out) = UDP-alpha-D-galactose(out) + CMP(in). It carries out the reaction UDP-N-acetyl-alpha-D-galactosamine(out) + UDP-alpha-D-galactose(in) = UDP-N-acetyl-alpha-D-galactosamine(in) + UDP-alpha-D-galactose(out). The enzyme catalyses UDP-N-acetyl-alpha-D-glucosamine(out) + UDP-alpha-D-galactose(in) = UDP-N-acetyl-alpha-D-glucosamine(in) + UDP-alpha-D-galactose(out). The catalysed reaction is UDP-alpha-D-galactose(in) + UDP-alpha-D-glucose(out) = UDP-alpha-D-galactose(out) + UDP-alpha-D-glucose(in). It catalyses the reaction UMP(out) + CMP(in) = UMP(in) + CMP(out). It carries out the reaction UMP(out) + AMP(in) = UMP(in) + AMP(out). Transports uridine diphosphate galactose (UDP-galactose) from the cytosol into the Golgi apparatus, functioning as an antiporter that exchanges UDP-galactose for UMP. It is also able to exchange UDP-galactose for AMP and CMP, and to transport UDP-N-acetylgalactosamine (UDP-GalNAc) and other nucleotide sugars. As a provider of UDP-galactose to galactosyltransferases present in the Golgi apparatus, it is necessary for globotriaosylceramide/globoside (Gb3Cer) synthesis from lactosylceramide. This Bos taurus (Bovine) protein is UDP-galactose translocator.